A 485-amino-acid polypeptide reads, in one-letter code: L-ornithine N(5)-oxygenase (485 aa).

FAD-binding positions include 49–57 (ERQQQFVWH) and Q68. K73 provides a ligand contact to L-ornithine. V134 contacts FAD. Residue R243 participates in NADP(+) binding. Residues 257-260 (NEIF) and N287 contribute to the L-ornithine site. 287 to 289 (NYS) contacts NADP(+). 425-427 (TLL) serves as a coordination point for FAD. S428 serves as a coordination point for L-ornithine.

The protein belongs to the lysine N(6)-hydroxylase/L-ornithine N(5)-oxygenase family. In terms of assembly, homotetramer. It depends on FAD as a cofactor.

It carries out the reaction L-ornithine + NADH + O2 = N(5)-hydroxy-L-ornithine + NAD(+) + H2O. It catalyses the reaction L-ornithine + NADPH + O2 = N(5)-hydroxy-L-ornithine + NADP(+) + H2O. The protein operates within siderophore biosynthesis. In terms of biological role, L-ornithine N(5)-oxygenase; part of the gene cluster that mediates the biosynthesis of desferriferrichrome that chelates Fe(3+) to form ferrichrome. Fe(3+) is a key factor for induction of trap formation and the fungus uses the iron chelating desferriferrichrome to sequester Fe(3+) to inhibit trap formation and increase nematicidal activity. The biosynthesis of desferriferrichrome requires the action of the L-ornithine N(5)-oxygenase (LOO) Ao414 that hydroxylates L-ornithine at N(5), resulting in the formation of N(5)-hydroxyl-L-ornithine, which is subsequently N-acetylated to yield N(5)-acetyl-N(5)-hydroxy-L-ornithine (L-AHO). L-AHO harbors one hydroxamate moiety, which is the key core responsible for chelating iron. Then, L-AHO is further condensated with glycines to form desferriferrichrome through the NRPS protein Ao415. This is L-ornithine N(5)-oxygenase from Arthrobotrys oligospora (strain ATCC 24927 / CBS 115.81 / DSM 1491) (Nematode-trapping fungus).